The sequence spans 152 residues: UPF0225 protein KPK_2103 (152 aa).

Belongs to the UPF0225 family.

This is UPF0225 protein KPK_2103 from Klebsiella pneumoniae (strain 342).